A 101-amino-acid chain; its full sequence is Eukaryotic translation initiation factor 4E-binding protein 3 (101 aa).

Residues 1-28 are disordered; it reads MSSSTSCPIPGCRDQLPDGYSTTPGGTL. The YXXXXLphi motif signature appears at 40 to 46; it reads YDRKFLL. The TOS motif motif lies at 97-101; it reads FEMDM.

Belongs to the eIF4E-binding protein family. As to quaternary structure, interacts with EIF4E. Interacts with RPA2 (via N-terminus); the interaction enhances EIF4EBP3-mediated inhibition of EIF4E-mediated mRNA nuclear export. Post-translationally, phosphorylated.

Its subcellular location is the cytoplasm. The protein resides in the nucleus. Repressor of translation initiation that regulates EIF4E activity by preventing its assembly into the eIF4F complex: the hypophosphorylated form competes with EIF4G1/EIF4G3 and strongly binds to EIF4E, leading to repression of translation. In contrast, the hyperphosphorylated form dissociates from EIF4E, allowing interaction between EIF4G1/EIF4G3 and EIF4E, leading to initiation of translation. Inhibits EIF4E-mediated mRNA nuclear export. In Mus musculus (Mouse), this protein is Eukaryotic translation initiation factor 4E-binding protein 3 (Eif4ebp3).